The sequence spans 296 residues: GTPase Era (296 aa).

Residues 3-170 (KSGFITIVGR…LELMVKYLPE (168 aa)) enclose the Era-type G domain. A G1 region spans residues 11–18 (GRPNVGKS). 11 to 18 (GRPNVGKS) contributes to the GTP binding site. A G2 region spans residues 37–41 (QTTRN). The interval 58 to 61 (DTPG) is G3. Residues 58-62 (DTPGI) and 120-123 (NKVD) each bind GTP. A G4 region spans residues 120-123 (NKVD). A G5 region spans residues 149–151 (ISA). The 78-residue stretch at 201-278 (LSQEVPHGIA…NIKIWVKVRK (78 aa)) folds into the KH type-2 domain.

It belongs to the TRAFAC class TrmE-Era-EngA-EngB-Septin-like GTPase superfamily. Era GTPase family. As to quaternary structure, monomer.

Its subcellular location is the cytoplasm. It localises to the cell membrane. In terms of biological role, an essential GTPase that binds both GDP and GTP, with rapid nucleotide exchange. Plays a role in 16S rRNA processing and 30S ribosomal subunit biogenesis and possibly also in cell cycle regulation and energy metabolism. The sequence is that of GTPase Era from Clostridium perfringens (strain 13 / Type A).